We begin with the raw amino-acid sequence, 73 residues long: UPF0154 protein MG335.1 homolog (73 aa).

Residues 6 to 26 form a helical membrane-spanning segment; sequence LALGLGIPLSLLVGVIIGYFI.

Belongs to the UPF0154 family.

Its subcellular location is the membrane. This chain is UPF0154 protein MG335.1 homolog, found in Mycoplasma pneumoniae (strain ATCC 29342 / M129 / Subtype 1) (Mycoplasmoides pneumoniae).